A 305-amino-acid chain; its full sequence is NAD kinase (305 aa).

Residue Asp88 is the Proton acceptor of the active site. NAD(+)-binding positions include 88-89, Arg93, 162-163, Lys173, Asn192, 203-208, and Gln262; these read DG, NE, and TAYSFS.

Belongs to the NAD kinase family. A divalent metal cation serves as cofactor.

It is found in the cytoplasm. It carries out the reaction NAD(+) + ATP = ADP + NADP(+) + H(+). Involved in the regulation of the intracellular balance of NAD and NADP, and is a key enzyme in the biosynthesis of NADP. Catalyzes specifically the phosphorylation on 2'-hydroxyl of the adenosine moiety of NAD to yield NADP. In Tropheryma whipplei (strain TW08/27) (Whipple's bacillus), this protein is NAD kinase.